Here is a 430-residue protein sequence, read N- to C-terminus: Probable acetate kinase (430 aa).

Position 12 (Asn12) interacts with Mg(2+). An ATP-binding site is contributed by Lys19. Arg100 contributes to the substrate binding site. Asp159 functions as the Proton donor/acceptor in the catalytic mechanism. 220–224 (HLGSG) serves as a coordination point for ATP. Glu416 lines the Mg(2+) pocket.

Belongs to the acetokinase family. Mg(2+) is required as a cofactor.

The enzyme catalyses acetate + ATP = acetyl phosphate + ADP. The protein operates within metabolic intermediate biosynthesis; acetyl-CoA biosynthesis; acetyl-CoA from acetate: step 1/2. The polypeptide is Probable acetate kinase (Cryptococcus neoformans var. neoformans serotype D (strain B-3501A) (Filobasidiella neoformans)).